A 638-amino-acid chain; its full sequence is 2-isopropylmalate synthase (638 aa).

Residues 72–346 (PRWCSVDLRD…DPQLDLSNVP (275 aa)) enclose the Pyruvate carboxyltransferase domain. 4 residues coordinate Mg(2+): Asp81, His285, His287, and Asn321. The regulatory domain stretch occupies residues 488–638 (VEQSGMTAAG…SAINRSQRQR (151 aa)).

It belongs to the alpha-IPM synthase/homocitrate synthase family. LeuA type 2 subfamily. As to quaternary structure, homodimer. Mg(2+) serves as cofactor.

The protein localises to the cytoplasm. It carries out the reaction 3-methyl-2-oxobutanoate + acetyl-CoA + H2O = (2S)-2-isopropylmalate + CoA + H(+). Its pathway is amino-acid biosynthesis; L-leucine biosynthesis; L-leucine from 3-methyl-2-oxobutanoate: step 1/4. Catalyzes the condensation of the acetyl group of acetyl-CoA with 3-methyl-2-oxobutanoate (2-ketoisovalerate) to form 3-carboxy-3-hydroxy-4-methylpentanoate (2-isopropylmalate). The chain is 2-isopropylmalate synthase from Bifidobacterium longum subsp. infantis (strain ATCC 15697 / DSM 20088 / JCM 1222 / NCTC 11817 / S12).